A 245-amino-acid polypeptide reads, in one-letter code: Acetoacetate decarboxylase (245 aa).

Catalysis depends on K116, which acts as the Schiff-base intermediate with acetoacetate.

This sequence belongs to the ADC family.

It carries out the reaction acetoacetate + H(+) = acetone + CO2. Its function is as follows. Catalyzes the conversion of acetoacetate to acetone and carbon dioxide. The polypeptide is Acetoacetate decarboxylase (Acidiphilium cryptum (strain JF-5)).